A 204-amino-acid chain; its full sequence is Transcriptional regulator GfcR (204 aa).

This sequence belongs to the purine/pyrimidine phosphoribosyltransferase family. GfcR subfamily.

In Methanosarcina mazei (strain ATCC BAA-159 / DSM 3647 / Goe1 / Go1 / JCM 11833 / OCM 88) (Methanosarcina frisia), this protein is Transcriptional regulator GfcR.